The primary structure comprises 1500 residues: MAPLWNGMAAGLLLSAAVVSGQANSRLGASPSYQGFSNICPEQCIVTGPEPSNWSTYNDMNRLANCNQAMLYGFNLYDDVDDADSYHRIFACTAYGNDWSDDSQSHVTNSRPEKEHKVNYEIGWSSYSPGTESDYRSLIRQMRDYVARGHISPSKTAMLYAQFGYTSAGIYIGNSLQSKDIGDVALQSLIDDSHDFDGRRDSLTMQLCGPHYDSQHVFGFMALRNGTFRAIQSAFKSWSNAECLDFEHSTNFTASTHFTSSMLSSIKAGNTTTSGIQAGGSALPAKLSTQHTKNLMSSTGECRTQKVQNGDSCAAIATRCGISGADFTKYNSEKSFCSKLKPGQHVCCSSGALPDFSPKPKEDGSCATTTVGDGESCSTIAAANSLTEKDIDGFNQKTWGWGGCKNIFKDSVICISKGSPPMPAEVSDAECGPQVPGTKLPKDMSKLADLNPCPLNACCNTFGHCGTTAEFCTDTNTGAPGTAKAGTNGCISHCGMDIVKGNAPTKFRSVGYYESYQFKRQCLYQDVMQVDHSKYTHLHFGFVDISSDYEISINDKSANYQFHNFKYISGPKRIVSFGGWDFSTQASTYQIFRQGTSAANRKKLATNIANFVKENNLDGVDIDWEYPSAPDIPGLPSGDKSEGNNYLEFLVVLKNLLGDKSVSIAAPGSYWYLKGFPIAKISKVIDYIVFMTYDLHGQWDAGNPNAQPGCDDGSCLRSHVNMTETKESLSLITKAGVDSGKVVVGVSSYGRSFRMVDADCDGPMCKFTGTRLHSNAEKADCTDTAGYISNAEINQLLDHNSSRVNKHYVDTHSNSNIMVYDNTNWVAYMSPEIRAERTKMYQSLGMGGTVNWATDLEKFNDAPEGVENWPGMILQMKSGTITPRGAGSRSGNWTKIGCDNEYSRETPYWSPMTRWRQLDAAGAWSDLIADWKNYRDKDHTGDKLSFSAQISYLLGGPDNVKCGQIDGDSNCPLISCKLFNIGNGTKSGAAAELIWDSFFKIHQMYAKFKSALVTDAALVIDNTLPHLENTFAPVPPPEDNAWLDMVLDFVSMGVPMVGGKFIDDFLKMIPAMTTKSDISLDHYKEVLSAILDSPATIATNLKGTSDPNDWTPEKQAEFSKYMGQSLQGWNYIFTKDLENLFDGTDKSIERLTIMISDGRMIDGIPKDIPYPDKTKRKDKDDDDNKKTEATDSEKKSVEDGFLTAFWAYSIPAVWQASGHHPFIIDTGRSCDDKDGDKYTKDLKSACYENRLYQLADPDGRSHPCDYDCGITGGCKCDDSAFSSLKGVEELDGKAWSGLKVEDIIIGSVRTYKQNGNENGGGTADPTDSGTFEALKQMDITTPGFMRLPVCSETLARTSWENADKTEATRNKDGFPCNNDNGRSYCTTSESTYIEETTSGSPLIDDCLVIVKNIEGTTGSWNKLIEIQYGIAHFGTCTFGIEGKGRHGNSNVYIGAQDIVDIIRYTSKHWGHGTDKMQGKGVMQCNGNIKQQELHWAIYKK.

An N-terminal signal peptide occupies residues 1–23 (MAPLWNGMAAGLLLSAAVVSGQA). N-linked (GlcNAc...) asparagine glycans are attached at residues asparagine 53, asparagine 225, asparagine 251, and asparagine 270. 2 LysM domains span residues 303–348 (RTQK…HVCC) and 367–415 (ATTT…VICI). One can recognise a Chitin-binding type-1 domain in the interval 428 to 496 (DAECGPQVPG…TNGCISHCGM (69 aa)). Disulfide bonds link cysteine 431–cysteine 459, cysteine 453–cysteine 465, cysteine 458–cysteine 472, and cysteine 490–cysteine 494. The 373-residue stretch at 507–879 (FRSVGYYESY…PGMILQMKSG (373 aa)) folds into the GH18 domain. The active-site Proton donor is glutamate 625. Tyrosine 626 is a chitin binding site. 2 N-linked (GlcNAc...) asparagine glycosylation sites follow: asparagine 721 and asparagine 800. Tryptophan 852 lines the chitin pocket. N-linked (GlcNAc...) asparagine glycans are attached at residues asparagine 892 and asparagine 983. Residues 1164–1193 (IPKDIPYPDKTKRKDKDDDDNKKTEATDSE) are disordered. The segment covering 1169–1193 (PYPDKTKRKDKDDDDNKKTEATDSE) has biased composition (basic and acidic residues).

This sequence belongs to the glycosyl hydrolase 18 family. Chitinase class V subfamily.

It is found in the secreted. It catalyses the reaction Random endo-hydrolysis of N-acetyl-beta-D-glucosaminide (1-&gt;4)-beta-linkages in chitin and chitodextrins.. Its function is as follows. Secreted chitinase involved in the degradation of chitin, a component of the cell walls of fungi and exoskeletal elements of some animals (including worms and arthropods). Involved in pathogenesis via manipulation of host defenses for successful infection. The polypeptide is Secreted chitinase LysM12 (Penicillium expansum (Blue mold rot fungus)).